Here is a 410-residue protein sequence, read N- to C-terminus: Peptidase T (410 aa).

The segment at 11-30 (RYAEIDTQSDPDSESTPSTE) is disordered. Position 78 (histidine 78) interacts with Zn(2+). The active site involves aspartate 80. Position 140 (aspartate 140) interacts with Zn(2+). Glutamate 174 functions as the Proton acceptor in the catalytic mechanism. Residues glutamate 175, aspartate 197, and histidine 379 each contribute to the Zn(2+) site.

It belongs to the peptidase M20B family. Requires Zn(2+) as cofactor.

Its subcellular location is the cytoplasm. The catalysed reaction is Release of the N-terminal residue from a tripeptide.. Its function is as follows. Cleaves the N-terminal amino acid of tripeptides. The polypeptide is Peptidase T (Staphylococcus carnosus (strain TM300)).